The chain runs to 194 residues: A-type ATP synthase subunit E (194 aa).

It belongs to the V-ATPase E subunit family. As to quaternary structure, has multiple subunits with at least A(3), B(3), C, D, E, F, H, I and proteolipid K(x).

It is found in the cell membrane. Its function is as follows. Component of the A-type ATP synthase that produces ATP from ADP in the presence of a proton gradient across the membrane. This chain is A-type ATP synthase subunit E, found in Saccharolobus islandicus (strain M.16.27) (Sulfolobus islandicus).